The chain runs to 286 residues: Polyamine aminopropyltransferase (286 aa).

The 234-residue stretch at 5-238 folds into the PABS domain; it reads KIWHEKLHRH…GTMMFSWGTD (234 aa). Positions 64 and 88 each coordinate spermidine. S-methyl-5'-thioadenosine contacts are provided by residues Glu-108 and 140–141; that span reads NG. Asp-158 acts as the Proton acceptor in catalysis. A spermidine-binding site is contributed by 158–161; it reads DSTD.

It belongs to the spermidine/spermine synthase family. In terms of assembly, homodimer or homotetramer.

The protein localises to the cytoplasm. It catalyses the reaction S-adenosyl 3-(methylsulfanyl)propylamine + putrescine = S-methyl-5'-thioadenosine + spermidine + H(+). The protein operates within amine and polyamine biosynthesis; spermidine biosynthesis; spermidine from putrescine: step 1/1. Catalyzes the irreversible transfer of a propylamine group from the amino donor S-adenosylmethioninamine (decarboxy-AdoMet) to putrescine (1,4-diaminobutane) to yield spermidine. This chain is Polyamine aminopropyltransferase, found in Buchnera aphidicola subsp. Schizaphis graminum (strain Sg).